The chain runs to 320 residues: Probable 5-dehydro-4-deoxyglucarate dehydratase (320 aa).

Belongs to the DapA family.

The enzyme catalyses 5-dehydro-4-deoxy-D-glucarate + H(+) = 2,5-dioxopentanoate + CO2 + H2O. Its pathway is carbohydrate acid metabolism; D-glucarate degradation; 2,5-dioxopentanoate from D-glucarate: step 2/2. This chain is Probable 5-dehydro-4-deoxyglucarate dehydratase, found in Streptomyces griseus subsp. griseus (strain JCM 4626 / CBS 651.72 / NBRC 13350 / KCC S-0626 / ISP 5235).